The primary structure comprises 615 residues: Nuclear receptor subfamily 1 group D member 1 (615 aa).

The span at Met1–Gly12 shows a compositional bias: polar residues. Positions Met1–Ser70 are required for phosphorylation by CSNK1E and cytoplasmic localization. The interval Met1–Thr120 is disordered. The tract at residues Met1–Met129 is modulating. The span at Ile14–Ser34 shows a compositional bias: low complexity. Residues Asp35–Cys48 show a composition bias toward polar residues. The tract at residues Pro49–Thr285 is crucial for activation of GJA1. 2 positions are modified to phosphoserine; by GSK3-beta: Ser55 and Ser59. Low complexity predominate over residues Ser70–Ser94. A DNA-binding region (nuclear receptor) is located at residues Val130–Phe206. 2 NR C4-type zinc fingers span residues Cys133–Cys153 and Cys170–Cys194. An N6-acetyllysine; by KAT5 mark is found at Lys192 and Lys193. 2 disordered regions span residues Leu235 to Met286 and Pro312 to Cys337. Over residues Thr240–Gly252 the composition is skewed to low complexity. Over residues Pro253 to Thr262 the composition is skewed to pro residues. Thr275 carries the phosphothreonine; by CDK1 modification. The region spanning Thr285–Gln615 is the NR LBD domain. The span at Pro312 to Thr328 shows a compositional bias: polar residues. A heme-binding site is contributed by Cys419. An N6-acetyllysine modification is found at Lys592. Heme is bound at residue His603.

This sequence belongs to the nuclear hormone receptor family. NR1 subfamily. As to quaternary structure, binds DNA as a monomer or a homodimer. Interacts with NR2E3 and ZNHIT1. Interacts with C1D. Interacts with SP1. Interacts with OPHN1 (via C-terminus). Interacts with PER2; the interaction associates PER2 to BMAL1 promoter region. Interacts with CRY1. Interacts with CCAR2. Interacts with SIAH2. Interacts with FBXW7 and CDK1. Interacts with HUWE1. Interacts with NR0B2. Interacts with NFIL3. Interacts (via domain NR LBD) with HSP90AA1 and HSP90AB1. Post-translationally, ubiquitinated, leading to its proteasomal degradation. Ubiquitinated by the SCF(FBXW7) complex when phosphorylated by CDK1 leading to its proteasomal degradation. Ubiquitinated by SIAH2; leading to its proteasomal degradation. Rapidly ubiquitinated in response to inflammatory triggers and sumoylation is a prerequisite to its ubiquitination. In terms of processing, sumoylated by UBE2I, desumoylated by SENP1, and sumoylation is a prerequisite to its ubiquitination. Phosphorylated by CSNK1E; phosphorylation enhances its cytoplasmic localization. Post-translationally, undergoes lysosome-mediated degradation in a time-dependent manner in the liver. In terms of tissue distribution, expressed during adipocyte differentiation (at protein level). Expressed in skeletal muscle, bladder, lumbar spinal cord, pancreatic islets and hypothalamus. Expressed in developing and adult retina. In the adult retina, predominantly expressed in the outer nuclear layer, where rod and cone cells reside, and also localized to the ganglion cell layer. Expressed in a circadian manner in the liver. Expressed in a circadian manner in the lung with a peak between ZT8 and ZT12.

It is found in the nucleus. It localises to the cytoplasm. The protein resides in the cell projection. Its subcellular location is the dendrite. The protein localises to the dendritic spine. In terms of biological role, transcriptional repressor which coordinates circadian rhythm and metabolic pathways in a heme-dependent manner. Integral component of the complex transcription machinery that governs circadian rhythmicity and forms a critical negative limb of the circadian clock by directly repressing the expression of core clock components BMAL1, CLOCK and CRY1. Also regulates genes involved in metabolic functions, including lipid and bile acid metabolism, adipogenesis, gluconeogenesis and the macrophage inflammatory response. Acts as a receptor for heme which stimulates its interaction with the NCOR1/HDAC3 corepressor complex, enhancing transcriptional repression. Recognizes two classes of DNA response elements within the promoter of its target genes and can bind to DNA as either monomers or homodimers, depending on the nature of the response element. Binds as a monomer to a response element composed of the consensus half-site motif 5'-[A/G]GGTCA-3' preceded by an A/T-rich 5' sequence (RevRE), or as a homodimer to a direct repeat of the core motif spaced by two nucleotides (RevDR-2). Acts as a potent competitive repressor of ROR alpha (RORA) function and regulates the levels of its ligand heme by repressing the expression of PPARGC1A, a potent inducer of heme synthesis. Regulates lipid metabolism by repressing the expression of APOC3 and by influencing the activity of sterol response element binding proteins (SREBPs); represses INSIG2 which interferes with the proteolytic activation of SREBPs which in turn govern the rhythmic expression of enzymes with key functions in sterol and fatty acid synthesis. Regulates gluconeogenesis via repression of G6PC1 and PEPCK and adipocyte differentiation via repression of PPARG. Regulates glucagon release in pancreatic alpha-cells via the AMPK-NAMPT-SIRT1 pathway and the proliferation, glucose-induced insulin secretion and expression of key lipogenic genes in pancreatic-beta cells. Positively regulates bile acid synthesis by increasing hepatic expression of CYP7A1 via repression of NR0B2 and NFIL3 which are negative regulators of CYP7A1. Modulates skeletal muscle oxidative capacity by regulating mitochondrial biogenesis and autophagy; controls mitochondrial biogenesis and respiration by interfering with the STK11-PRKAA1/2-SIRT1-PPARGC1A signaling pathway. Represses the expression of SERPINE1/PAI1, an important modulator of cardiovascular disease and the expression of inflammatory cytokines and chemokines in macrophages. Represses gene expression at a distance in macrophages by inhibiting the transcription of enhancer-derived RNAs (eRNAs). Plays a role in the circadian regulation of body temperature and negatively regulates thermogenic transcriptional programs in brown adipose tissue (BAT); imposes a circadian oscillation in BAT activity, increasing body temperature when awake and depressing thermogenesis during sleep. In concert with NR2E3, regulates transcriptional networks critical for photoreceptor development and function. In addition to its activity as a repressor, can also act as a transcriptional activator. In the ovarian granulosa cells acts as a transcriptional activator of STAR which plays a role in steroid biosynthesis. In collaboration with SP1, activates GJA1 transcription in a heme-independent manner. Represses the transcription of CYP2B10, CYP4A10 and CYP4A14. Represses the transcription of CES2. Represses and regulates the circadian expression of TSHB in a NCOR1-dependent manner. Negatively regulates the protein stability of NR3C1 and influences the time-dependent subcellular distribution of NR3C1, thereby affecting its transcriptional regulatory activity. Plays a critical role in the circadian control of neutrophilic inflammation in the lung; under resting, non-stress conditions, acts as a rhythmic repressor to limit inflammatory activity whereas in the presence of inflammatory triggers undergoes ubiquitin-mediated degradation thereby relieving inhibition of the inflammatory response. Plays a key role in the circadian regulation of microglial activation and neuroinflammation; suppresses microglial activation through the NF-kappaB pathway in the central nervous system. Plays a role in the regulation of the diurnal rhythms of lipid and protein metabolism in the skeletal muscle via transcriptional repression of genes controlling lipid and amino acid metabolism in the muscle. The polypeptide is Nuclear receptor subfamily 1 group D member 1 (Nr1d1) (Mus musculus (Mouse)).